The chain runs to 323 residues: MLRTVDLSGRSVAVKVPATSANLGPGFDTLGLALAQYDELRVSVRPEPGATVVVRGIGEGEVPTDETNLVVRAIAHTFESVGVELPGLSLVARNSIPHGRGMGSSGAAIVSGIMAAKGLLQGVADIDAQGLLALANDMEGHPDNVAPALFGGLTIAWVTPDGPRFKKLIVHRGVSPLVLVPERVMSTALARSLQPASVPHEDAVFNVSRSALLVAALIQSPELLHAATEDKLHQSYRASAMPETDRLITLLRTNGFAAVVSGAGPSILVLCSDPGQRLAAARLVATQGAAAWQPLMLAVDFKGATVPRIAEDAVSGEGDTTAV.

Position 97–107 (97–107) interacts with ATP; it reads PHGRGMGSSGA.

This sequence belongs to the GHMP kinase family. Homoserine kinase subfamily.

The protein localises to the cytoplasm. The enzyme catalyses L-homoserine + ATP = O-phospho-L-homoserine + ADP + H(+). The protein operates within amino-acid biosynthesis; L-threonine biosynthesis; L-threonine from L-aspartate: step 4/5. Its function is as follows. Catalyzes the ATP-dependent phosphorylation of L-homoserine to L-homoserine phosphate. The polypeptide is Homoserine kinase (Leifsonia xyli subsp. xyli (strain CTCB07)).